The primary structure comprises 145 residues: Peptidyl-prolyl cis-trans isomerase (145 aa).

The PPIase cyclophilin-type domain occupies Met-1–Ala-145.

Belongs to the cyclophilin-type PPIase family.

It catalyses the reaction [protein]-peptidylproline (omega=180) = [protein]-peptidylproline (omega=0). Its function is as follows. PPIases accelerate the folding of proteins. It catalyzes the cis-trans isomerization of proline imidic peptide bonds in oligopeptides. The chain is Peptidyl-prolyl cis-trans isomerase (rot) from Synechococcus elongatus (strain ATCC 33912 / PCC 7942 / FACHB-805) (Anacystis nidulans R2).